We begin with the raw amino-acid sequence, 205 residues long: Large ribosomal subunit protein uL4 (205 aa).

Residues 43–95 form a disordered region; that stretch reads RSGNRAQKDRAEVKHSTKKPWRQKGTGRARAGMTSSPLWRGGGRAFPNSPEEN. Positions 48-57 are enriched in basic and acidic residues; it reads AQKDRAEVKH. Residues 58–69 are compositionally biased toward basic residues; that stretch reads STKKPWRQKGTG.

The protein belongs to the universal ribosomal protein uL4 family. As to quaternary structure, part of the 50S ribosomal subunit.

In terms of biological role, one of the primary rRNA binding proteins, this protein initially binds near the 5'-end of the 23S rRNA. It is important during the early stages of 50S assembly. It makes multiple contacts with different domains of the 23S rRNA in the assembled 50S subunit and ribosome. Its function is as follows. Forms part of the polypeptide exit tunnel. This is Large ribosomal subunit protein uL4 from Bordetella bronchiseptica (strain ATCC BAA-588 / NCTC 13252 / RB50) (Alcaligenes bronchisepticus).